A 314-amino-acid chain; its full sequence is Cytochrome f (314 aa).

A signal peptide spans 1 to 29 (MTRSISISVLIISVLIMIYVITRTSISNA). Tyr30, Cys50, Cys53, and His54 together coordinate heme. The chain crosses the membrane as a helical span at residues 280-300 (VQGLLFFLASVILAQIFLVLK).

This sequence belongs to the cytochrome f family. As to quaternary structure, the 4 large subunits of the cytochrome b6-f complex are cytochrome b6, subunit IV (17 kDa polypeptide, petD), cytochrome f and the Rieske protein, while the 4 small subunits are PetG, PetL, PetM and PetN. The complex functions as a dimer. It depends on heme as a cofactor.

Its subcellular location is the plastid. It is found in the chloroplast thylakoid membrane. Component of the cytochrome b6-f complex, which mediates electron transfer between photosystem II (PSII) and photosystem I (PSI), cyclic electron flow around PSI, and state transitions. The polypeptide is Cytochrome f (Illicium oligandrum (Star anise)).